The following is an 813-amino-acid chain: Receptor-like protein 48 (813 aa).

The N-terminal stretch at 1-30 is a signal peptide; the sequence is MHSCSERRMMTVIWSLCLIFCLSNSILAIA. Over 31 to 786 the chain is Extracellular; it reads KDLCLPDQRD…EDEEKEEKNQ (756 aa). Residues Asn69, Asn105, and Asn123 are each glycosylated (N-linked (GlcNAc...) asparagine). LRR repeat units follow at residues 111-134, 136-159, and 160-182; these read LQHL…SIGN, KYLR…LGSL, and SYLT…SGGN. Residues Asn195 and Asn216 are each glycosylated (N-linked (GlcNAc...) asparagine). LRR repeat units lie at residues 196–219, 220–244, 245–260, 261–285, 288–310, 311–335, 336–359, 361–381, 382–405, 406–432, 434–450, 451–473, 475–498, 500–521, 523–544, 545–571, 572–595, 642–666, 667–690, 691–714, and 716–739; these read LSSV…NMSS, LSKL…LFMI, PSLN…NISS, HSEL…LSKL, LRDL…IFLH, LKSL…FFSH, LMSL…SFPS, TGTL…LENQ, TSLF…LWRL, PTLS…IYSF, ASDN…VCEL, VSLN…CFEN, KTIS…IISE, LTSL…LIKC, DLEF…WLRS, LSNL…SLSF, PKLR…YFAG, FTIY…IGIL, KELI…LSNL, SNLQ…LGKL, and FLEW…QIQS. N-linked (GlcNAc...) asparagine glycosylation is found at Asn248 and Asn257. N-linked (GlcNAc...) asparagine glycosylation occurs at Asn380. N-linked (GlcNAc...) asparagine glycosylation is present at Asn484. 2 N-linked (GlcNAc...) asparagine glycosylation sites follow: Asn673 and Asn689. Residues Asn721 and Asn741 are each glycosylated (N-linked (GlcNAc...) asparagine). The interval 756-785 is disordered; that stretch reads FLNKCGGEEEEEEEATKQEEDEDEEKEEKN. A compositionally biased stretch (acidic residues) spans 763–781; the sequence is EEEEEEEATKQEEDEDEEK. A helical membrane pass occupies residues 787–807; that stretch reads VFSWIAAAIGYVPGVFCGLTI. Residues 808-813 lie on the Cytoplasmic side of the membrane; sequence AHILTS.

Belongs to the RLP family.

The protein resides in the cell membrane. Plays a role in root hair development. The protein is Receptor-like protein 48 of Arabidopsis thaliana (Mouse-ear cress).